A 789-amino-acid polypeptide reads, in one-letter code: Zinc finger protein GLIS1 (789 aa).

Basic and acidic residues-rich tracts occupy residues 1–16 (MHCE…RPKE) and 63–74 (RAHDLLRPRSPR). 3 disordered regions span residues 1–29 (MHCE…GPVS), 53–93 (LLPR…YGHS), and 278–304 (PPLP…QEGS). Over residues 80–92 (KTGSGKVNGSYGH) the composition is skewed to polar residues. The C2H2-type 1 zinc finger occupies 366–391 (QACRWVDCCAAYEQQEELVRHIEKSH). The C2H2-type 2; atypical zinc-finger motif lies at 400 to 427 (FTCFWAGCVRRYKPFNARYKLLIHMRVH). 3 C2H2-type zinc fingers span residues 433-457 (NKCM…LRSH), 463-487 (YLCQ…QRTH), and 493-517 (YACQ…VKAH). Disordered stretches follow at residues 506–529 (DPSS…KKLH) and 573–684 (VYPG…QGYQ). The Bipartite nuclear localization signal motif lies at 511-527 (RKHVKAHSAKEQQVRKK). The segment covering 648-658 (ASQSQSPGGQS) has biased composition (low complexity).

Belongs to the GLI C2H2-type zinc-finger protein family. As to quaternary structure, interacts with KLF4. Interacts with POU5F1 and/or POU5F1B. Interacts with SOX2. In terms of tissue distribution, in the adult, expressed highly in placenta and kidney and at lower levels in the testis, brain, colon, brown fat tissue and thymus. During embryo development, expressed in the frontal nasal region, branchial arches, somites, vibrissal and hair follicles, limb buds, craniofacial regions, ventral part of the tail, intervertebral disks, teeth, eyes and kidney.

The protein localises to the nucleus. In terms of biological role, acts both as a repressor and an ctivator of transcription. Binds to the consensus sequence 5'-GACCACCCAC-3'. By controlling the expression of genes involved in cell differentiation inhibits the lineage commitment of multipotent cells. Prevents, for instance, the differentiation of multipotent mesenchymal cells into adipocyte and osteoblast. This chain is Zinc finger protein GLIS1, found in Mus musculus (Mouse).